Reading from the N-terminus, the 294-residue chain is 4-hydroxy-tetrahydrodipicolinate synthase (294 aa).

Position 44 (T44) interacts with pyruvate. Y132 acts as the Proton donor/acceptor in catalysis. Residue K161 is the Schiff-base intermediate with substrate of the active site. Residue I206 coordinates pyruvate.

The protein belongs to the DapA family. As to quaternary structure, homotetramer; dimer of dimers.

It localises to the cytoplasm. The catalysed reaction is L-aspartate 4-semialdehyde + pyruvate = (2S,4S)-4-hydroxy-2,3,4,5-tetrahydrodipicolinate + H2O + H(+). It functions in the pathway amino-acid biosynthesis; L-lysine biosynthesis via DAP pathway; (S)-tetrahydrodipicolinate from L-aspartate: step 3/4. Catalyzes the condensation of (S)-aspartate-beta-semialdehyde [(S)-ASA] and pyruvate to 4-hydroxy-tetrahydrodipicolinate (HTPA). The sequence is that of 4-hydroxy-tetrahydrodipicolinate synthase from Thermotoga sp. (strain RQ2).